The following is a 421-amino-acid chain: Gamma-glutamyl phosphate reductase (421 aa).

This sequence belongs to the gamma-glutamyl phosphate reductase family.

The protein resides in the cytoplasm. The catalysed reaction is L-glutamate 5-semialdehyde + phosphate + NADP(+) = L-glutamyl 5-phosphate + NADPH + H(+). It participates in amino-acid biosynthesis; L-proline biosynthesis; L-glutamate 5-semialdehyde from L-glutamate: step 2/2. Catalyzes the NADPH-dependent reduction of L-glutamate 5-phosphate into L-glutamate 5-semialdehyde and phosphate. The product spontaneously undergoes cyclization to form 1-pyrroline-5-carboxylate. This is Gamma-glutamyl phosphate reductase from Nocardia farcinica (strain IFM 10152).